The primary structure comprises 266 residues: Gasdermin bGSDM (266 aa).

The next 4 beta stranded transmembrane spans lie at leucine 67–isoleucine 83, lysine 95–glutamine 113, serine 162–alanine 179, and alanine 187–tyrosine 203.

The protein belongs to the bacterial gasdermin family. As to quaternary structure, monomer. In terms of assembly, forms large, homooligomeric ring-shaped pores when inserted in membranes.

The protein resides in the cytoplasm. Its subcellular location is the cell inner membrane. With respect to regulation, the full-length protein before cleavage is inactive: intramolecular interactions between the N-terminal domain and the C-terminal region mediate autoinhibition. The pyroptosis-like-inducing activity is carried by the released N-terminal domain (Gasdermin bGSDM, N-terminus). Functionally, precursor of a pore-forming protein involved in defense against bacteriophages. Expression of bGSDM and the neighboring protease gene (Gilli_2517) is not toxic in E.coli. Cleavage of this precursor by its dedicated protease releases the active moiety (gasdermin bGSDM, N-terminus) which inserts into membranes, forming pores and triggering cell death. Pore-forming protein that causes membrane permeabilization via a pyroptosis-like activity. Makes ring-like pores when released. The sequence is that of Gasdermin bGSDM from Gillisia limnaea (strain DSM 15749 / LMG 21470 / R-8282).